The sequence spans 265 residues: NAD kinase (265 aa).

Catalysis depends on Asp45, which acts as the Proton acceptor. Residues 45-46, 121-122, Arg147, Asp149, 160-165, Ala184, and Gln222 each bind NAD(+); these read DG, NE, and TAYSKS.

The protein belongs to the NAD kinase family. The cofactor is a divalent metal cation.

It localises to the cytoplasm. It carries out the reaction NAD(+) + ATP = ADP + NADP(+) + H(+). Involved in the regulation of the intracellular balance of NAD and NADP, and is a key enzyme in the biosynthesis of NADP. Catalyzes specifically the phosphorylation on 2'-hydroxyl of the adenosine moiety of NAD to yield NADP. This is NAD kinase from Lacticaseibacillus paracasei (strain ATCC 334 / BCRC 17002 / CCUG 31169 / CIP 107868 / KCTC 3260 / NRRL B-441) (Lactobacillus paracasei).